Consider the following 142-residue polypeptide: Chorion protein S16 (142 aa).

An N-terminal signal peptide occupies residues 1–21; the sequence is MSANYMRLLCLMACCLSICLA.

The protein belongs to the chorion protein S16 family.

It is found in the secreted. Chorion membrane (egg shell) protein; plays a role in protecting the egg from the environment. The sequence is that of Chorion protein S16 (Cp16) from Drosophila grimshawi (Hawaiian fruit fly).